Consider the following 377-residue polypeptide: uncharacterized protein (377 aa).

The segment at 1–46 (MLAGLRRRGSMTTPPGPEIPPPHQGGFYSAGHHPQRPWPETPPPKT) is disordered. 2 stretches are compositionally biased toward pro residues: residues 14-23 (PPGPEIPPPH) and 36-45 (RPWPETPPPK). The helical transmembrane segment at 53 to 73 (MLGAVALLAVVGVTVAVTLAV) threads the bilayer. The interval 77 to 107 (DKRDAIPPGSGVSGSPTASDIASADDSGPVS) is disordered.

Its subcellular location is the cell inner membrane. May be involved in the ESX-1 / type VII specialized secretion system (T7SS), which exports several proteins including EsxA and EsxB. Involved in DNA conjugation in the recipient strain. This is an uncharacterized protein from Mycolicibacterium smegmatis (strain MKD8) (Mycobacterium smegmatis).